A 99-amino-acid chain; its full sequence is NADH-quinone oxidoreductase subunit K (99 aa).

A run of 3 helical transmembrane segments spans residues 3–23 (PTYY…GVLV), 28–48 (IVVF…LVTF), and 59–79 (VMAF…LAII).

The protein belongs to the complex I subunit 4L family. NDH-1 is composed of 14 different subunits. Subunits NuoA, H, J, K, L, M, N constitute the membrane sector of the complex.

It localises to the cell membrane. The catalysed reaction is a quinone + NADH + 5 H(+)(in) = a quinol + NAD(+) + 4 H(+)(out). Functionally, NDH-1 shuttles electrons from NADH, via FMN and iron-sulfur (Fe-S) centers, to quinones in the respiratory chain. The immediate electron acceptor for the enzyme in this species is believed to be a menaquinone. Couples the redox reaction to proton translocation (for every two electrons transferred, four hydrogen ions are translocated across the cytoplasmic membrane), and thus conserves the redox energy in a proton gradient. The protein is NADH-quinone oxidoreductase subunit K of Saccharopolyspora erythraea (strain ATCC 11635 / DSM 40517 / JCM 4748 / NBRC 13426 / NCIMB 8594 / NRRL 2338).